We begin with the raw amino-acid sequence, 272 residues long: Heat stress transcription factor A-7a (272 aa).

A disordered region spans residues 1-26 (MMNPFLPEGCDPPPPPQPMEGLHENA). Residues 27 to 121 (PPPFLTKTFE…LLKNIKRRNP (95 aa)) mediate DNA binding. The hydrophobic repeat HR-A/B stretch occupies residues 132-186 (ACNELRREKQVLMMEIVSLRQQQQTTKSYIKAMEQRIEGTERKQRQMMSFLARAM). A Bipartite nuclear localization signal motif is present at residues 201-216 (KKIKELEDNESAKRKR). Positions 203-212 (IKELEDNESA) are enriched in basic and acidic residues. The interval 203–223 (IKELEDNESAKRKRGSSSMSE) is disordered. The AHA motif lies at 256 to 265 (DGFWEELLSD).

The protein belongs to the HSF family. Class A subfamily. In terms of assembly, homotrimer. In terms of processing, exhibits temperature-dependent phosphorylation.

Its subcellular location is the nucleus. Functionally, transcriptional activator that specifically binds DNA sequence 5'-AGAAnnTTCT-3' known as heat shock promoter elements (HSE). In Arabidopsis thaliana (Mouse-ear cress), this protein is Heat stress transcription factor A-7a (HSFA7A).